The primary structure comprises 269 residues: Protein tsct-1 (269 aa).

This sequence belongs to the TSC-22/Dip/Bun family.

The chain is Protein tsct-1 from Caenorhabditis elegans.